A 424-amino-acid polypeptide reads, in one-letter code: Glutamate-1-semialdehyde 2,1-aminomutase (424 aa).

At Lys-266 the chain carries N6-(pyridoxal phosphate)lysine.

The protein belongs to the class-III pyridoxal-phosphate-dependent aminotransferase family. HemL subfamily. Homodimer. Pyridoxal 5'-phosphate serves as cofactor.

The protein localises to the cytoplasm. The enzyme catalyses (S)-4-amino-5-oxopentanoate = 5-aminolevulinate. The protein operates within porphyrin-containing compound metabolism; protoporphyrin-IX biosynthesis; 5-aminolevulinate from L-glutamyl-tRNA(Glu): step 2/2. The polypeptide is Glutamate-1-semialdehyde 2,1-aminomutase (Azoarcus sp. (strain BH72)).